The primary structure comprises 261 residues: Acetylglutamate kinase (261 aa).

Substrate-binding positions include 48–49 (GG), arginine 70, and asparagine 164.

Belongs to the acetylglutamate kinase family. ArgB subfamily.

It is found in the cytoplasm. It carries out the reaction N-acetyl-L-glutamate + ATP = N-acetyl-L-glutamyl 5-phosphate + ADP. It participates in amino-acid biosynthesis; L-arginine biosynthesis; N(2)-acetyl-L-ornithine from L-glutamate: step 2/4. Functionally, catalyzes the ATP-dependent phosphorylation of N-acetyl-L-glutamate. This is Acetylglutamate kinase from Roseiflexus sp. (strain RS-1).